The primary structure comprises 523 residues: Signal peptide peptidase-like 3 (523 aa).

Residues 1 to 35 (MAFPAPSSSSPRRRGRGLAYLLVSVLLLASRVPGA) form the signal peptide. Over 36-207 (AGADSEFEDG…EKPSFDGAIP (172 aa)) the chain is Lumenal. The region spanning 110–182 (SAPLASSIAV…SQSAGRKILS (73 aa)) is the PA domain. Residue Asn159 is glycosylated (N-linked (GlcNAc...) asparagine). The helical transmembrane segment at 208 to 228 (FLWLMAVGSVACASVWSFVVV) threads the bilayer. Topologically, residues 229-254 (GDEDKNAPTLGGEEAADSEIVELQTK) are cytoplasmic. Residues 255–272 (TALVFIVTASLVLLFLFF) form a helical membrane-spanning segment. Over 273-275 (FKS) the chain is Lumenal. A helical transmembrane segment spans residues 276-298 (TWSAWLLVVLFCLSGLQGLHYVA). Residues 299-321 (STLIVRTCDRCREAKVALPVLGN) lie on the Cytoplasmic side of the membrane. The chain crosses the membrane as a helical span at residues 322-342 (VTVVTLVILPLALIFVVVWAV). Over 343 to 347 (HQNSP) the chain is Lumenal. The helical transmembrane segment at 348 to 368 (FAWVGQDLMGICMMILVLQVV) threads the bilayer. The Cytoplasmic segment spans residues 369-377 (HLPNIKVAT). The helical transmembrane segment at 378-398 (ALLVSAFMYDIFWVFISPFIF) threads the bilayer. Residue Asp387 is part of the active site. The Lumenal portion of the chain corresponds to 399–430 (KKSVMITVARGSDEGPSLPMVLKMPKEFDTWN). Residues 431–451 (GYDMIGFGDILFPGLLVAFSF) form a helical membrane-spanning segment. The active site involves Asp439. The Cytoplasmic portion of the chain corresponds to 452–465 (RYDRANGKDLTDGY). Residues 466–486 (FLCLMIGYAFGLSCTYVGLYL) traverse the membrane as a helical segment. Topologically, residues 487–489 (MKS) are lumenal. Residues 490 to 510 (GQPALLYLVPSTLGTIVTLGA) form a helical membrane-spanning segment. The short motif at 492–494 (PAL) is the PAL element. The Cytoplasmic segment spans residues 511-523 (KRGELSQLWNAKV).

The protein belongs to the peptidase A22B family. Glycosylated.

Its subcellular location is the endosome membrane. Functionally, intramembrane-cleaving aspartic protease (I-CLiP) that cleaves type II membrane signal peptides in the hydrophobic plane of the membrane. This Oryza sativa subsp. japonica (Rice) protein is Signal peptide peptidase-like 3 (SPPL3).